The primary structure comprises 135 residues: Transcription antitermination protein NusB (135 aa).

It belongs to the NusB family.

Functionally, involved in transcription antitermination. Required for transcription of ribosomal RNA (rRNA) genes. Binds specifically to the boxA antiterminator sequence of the ribosomal RNA (rrn) operons. In Clostridium perfringens (strain SM101 / Type A), this protein is Transcription antitermination protein NusB.